Consider the following 176-residue polypeptide: Translation initiation factor IF-3 (176 aa).

Belongs to the IF-3 family. As to quaternary structure, monomer.

It is found in the cytoplasm. In terms of biological role, IF-3 binds to the 30S ribosomal subunit and shifts the equilibrium between 70S ribosomes and their 50S and 30S subunits in favor of the free subunits, thus enhancing the availability of 30S subunits on which protein synthesis initiation begins. The polypeptide is Translation initiation factor IF-3 (Nitratidesulfovibrio vulgaris (strain ATCC 29579 / DSM 644 / CCUG 34227 / NCIMB 8303 / VKM B-1760 / Hildenborough) (Desulfovibrio vulgaris)).